Reading from the N-terminus, the 199-residue chain is 7-methyl-GTP pyrophosphatase (199 aa).

The active-site Proton acceptor is the Asp72.

This sequence belongs to the Maf family. YceF subfamily. It depends on a divalent metal cation as a cofactor.

The protein resides in the cytoplasm. It catalyses the reaction N(7)-methyl-GTP + H2O = N(7)-methyl-GMP + diphosphate + H(+). Functionally, nucleoside triphosphate pyrophosphatase that hydrolyzes 7-methyl-GTP (m(7)GTP). May have a dual role in cell division arrest and in preventing the incorporation of modified nucleotides into cellular nucleic acids. This Alkalilimnicola ehrlichii (strain ATCC BAA-1101 / DSM 17681 / MLHE-1) protein is 7-methyl-GTP pyrophosphatase.